The primary structure comprises 991 residues: Toll-like receptor 13 (991 aa).

Residues 1–68 (MSGLYRILVQ…GFSLPPVAET (68 aa)) form the signal peptide. Residues 69–783 (YGFNKCTQYE…DAMCNFDLGK (715 aa)) are Extracellular-facing. Residues Asn93, Asn109, and Asn125 are each glycosylated (N-linked (GlcNAc...) asparagine). LRR repeat units follow at residues 104–125 (YTTH…SFTN), 128–149 (ALVD…AFRG), 152–174 (NLTL…EGLS), 175–196 (SLKT…AFTP), 199–220 (KLKY…LEAV), 225–246 (CLER…PRSL), 248–268 (SLTH…SALS), 271–292 (NLTN…YLKT), 295–315 (QLKS…SAKH), 318–338 (NLRA…DMKT), 348–368 (KLET…KQLA), 372–394 (RLLF…EFNA), 397–418 (SLQK…TWSS), 421–442 (NLTS…AFSP), 445–466 (HLEF…AFSG), 469–490 (ALKE…SFTQ), 493–514 (NLEV…TFRP), 517–538 (KLQS…SFSG), 541–562 (NLRS…LFSG), 565–585 (KLLI…RTLQ), 594–617 (SLKQ…FFQG), 620–641 (SLQE…QFDP), 644–665 (NLTK…LNAS), 672–693 (RLKI…MFSS), and 696–716 (SLQV…SHLK). 2 N-linked (GlcNAc...) asparagine glycosylation sites follow: Asn152 and Asn167. 7 N-linked (GlcNAc...) asparagine glycosylation sites follow: Asn209, Asn233, Asn263, Asn271, Asn274, Asn300, and Asn310. 4 N-linked (GlcNAc...) asparagine glycosylation sites follow: Asn357, Asn388, Asn413, and Asn421. Residues Asn644 and Asn663 are each glycosylated (N-linked (GlcNAc...) asparagine). N-linked (GlcNAc...) asparagine glycosylation is found at Asn711 and Asn742. The LRRCT domain maps to 729-779 (NKLQCTCDNLWFKNWSMNTEEVHIPFLRSYPCQQPGSQSLLIDFDDAMCNF). The helical transmembrane segment at 784–804 (VYFLCSFSMVLSTMVFSWFST) threads the bilayer. Residues 805 to 991 (KMIASLWYGL…KENTHLIVVE (187 aa)) lie on the Cytoplasmic side of the membrane. The TIR domain occupies 832 to 975 (FLYDAFVSFS…LFWARIRNAL (144 aa)).

The protein belongs to the Toll-like receptor family. Binds MYD88 via their respective TIR domains. Interacts with UNC93B1.

The protein resides in the endosome membrane. Component of innate and adaptive immunity that recognizes and binds 23S rRNA from bacteria. TLRs (Toll-like receptors) control host immune response against pathogens through recognition of molecular patterns specific to microorganisms. Acts via MYD88 and TRAF6, leading to NF-kappa-B activation, cytokine secretion and the inflammatory response. Specifically binds the 5'-CGGAAAGACC-3' sequence on bacterial 23S rRNA, a sequence also bound by MLS group antibiotics (including erythromycin). May also recognize vesicular stomatitis virus; however, these data require additional evidences. The chain is Toll-like receptor 13 (Tlr13) from Mus musculus (Mouse).